We begin with the raw amino-acid sequence, 261 residues long: Syntaxin-7 (261 aa).

Ser2 is modified (N-acetylserine). Residues 2–238 (SYTPGVGGDP…DYQRKSRKTL (237 aa)) are Cytoplasmic-facing. Thr4 bears the Phosphothreonine mark. Ser45 is subject to Phosphoserine. The stretch at 47–69 (ELRQQLQQKQQYTNQLAKETDKY) forms a coiled coil. Ser75 carries the post-translational modification Phosphoserine. Residue Thr79 is modified to Phosphothreonine. Phosphoserine occurs at positions 125, 126, 129, and 205. A disordered region spans residues 129 to 148 (SGSFPEDSSKERNLVSWESQ). A t-SNARE coiled-coil homology domain is found at 165 to 227 (LRLIHERESS…QQANQQLSRA (63 aa)). A helical; Anchor for type IV membrane protein transmembrane segment spans residues 239-259 (CIIILILVIGVAIISLIIWGL). Topologically, residues 260–261 (NH) are vesicular.

Belongs to the syntaxin family. As to quaternary structure, forms a SNARE complex with VTI1B, STX8 and VAMP8 which functions in the homotypic fusion of late endosomes. Component of the SNARE complex composed of STX7, STX8, VAMP7 and VTI1B that is required for heterotypic fusion of late endosomes with lysosomes. Interacts with VPS11, VPS16 and VPS18. Interacts with VPS33A. Interacts with TPC1. Highest expression is found in placenta followed by heart, skeletal muscle, kidney and brain. Low expression is found in pancreas, lung and liver.

It is found in the early endosome membrane. May be involved in protein trafficking from the plasma membrane to the early endosome (EE) as well as in homotypic fusion of endocytic organelles. Mediates the endocytic trafficking from early endosomes to late endosomes and lysosomes. The polypeptide is Syntaxin-7 (STX7) (Homo sapiens (Human)).